We begin with the raw amino-acid sequence, 455 residues long: Carbamoyl phosphate synthase arginine-specific small chain (455 aa).

The transit peptide at 1–28 directs the protein to the mitochondrion; sequence MFARFCKAIPAKGRAFPSVNASIQSRLM. The Glutamine amidotransferase type-1 domain maps to 219–406; that stretch reads HVAVIDCGVK…IDSVRKYKAN (188 aa). Catalysis depends on Cys-295, which acts as the Nucleophile. Residues His-379 and Glu-381 contribute to the active site.

The protein belongs to the CarA family. Heterodimer composed of 2 chains; the small (or glutamine) chain promotes the hydrolysis of glutamine to ammonia, which is used by the large (or ammonia) chain to synthesize carbamoyl phosphate.

Its subcellular location is the mitochondrion matrix. It catalyses the reaction hydrogencarbonate + L-glutamine + 2 ATP + H2O = carbamoyl phosphate + L-glutamate + 2 ADP + phosphate + 2 H(+). The catalysed reaction is L-glutamine + H2O = L-glutamate + NH4(+). Its pathway is amino-acid biosynthesis; L-arginine biosynthesis; carbamoyl phosphate from bicarbonate: step 1/1. In terms of biological role, small subunit of the arginine-specific carbamoyl phosphate synthase (CPSase). CPSase catalyzes the formation of carbamoyl phosphate from the ammonia moiety of glutamine, carbonate, and phosphate donated by ATP, the first step of the arginine biosynthetic pathway. The small subunit (glutamine amidotransferase) binds and cleaves glutamine to supply the large subunit with the substrate ammonia. This Aspergillus clavatus (strain ATCC 1007 / CBS 513.65 / DSM 816 / NCTC 3887 / NRRL 1 / QM 1276 / 107) protein is Carbamoyl phosphate synthase arginine-specific small chain (cpa1).